The following is a 185-amino-acid chain: Large ribosomal subunit protein bL25 (185 aa).

The protein belongs to the bacterial ribosomal protein bL25 family. CTC subfamily. In terms of assembly, part of the 50S ribosomal subunit; part of the 5S rRNA/L5/L18/L25 subcomplex. Contacts the 5S rRNA. Binds to the 5S rRNA independently of L5 and L18.

In terms of biological role, this is one of the proteins that binds to the 5S RNA in the ribosome where it forms part of the central protuberance. The polypeptide is Large ribosomal subunit protein bL25 (Chlamydia pneumoniae (Chlamydophila pneumoniae)).